The primary structure comprises 423 residues: MNNQLVPQNAAAAAAAAAAAAAAAAANSLKSRKPYTISKQRENWTDEEHQKFLEALTLFDRDWKKIESFVGSKTVIQIRSHAQKYFIKVQKNNTGERIPPPRPKRKSIQPYPQKQKHDGMGAFIPDSLSGNHFISSSSFATWMTYRGLMPNISESQINPSDLQKQLEQLQQAQQYIQQAVTTAQSSQRNGGLPPNPSSNNGGTTLTPNFPKIYAFLSNLFESNGTSFTEALSDLSMIDRETMQILMHNLAINLANQQYRDNHQTLSEQYRMKRDEDEDLNAIMISPRNSTGNINVSGDFYDNNSNNNNNNNNNNNNNNNNNNNNNNNNNNNNNNNNNNNNNNNNNNNNNNNNNNGGDFGDQNHSNMVNLGNYYNNHPNQNTINALYSLNQPSTLSNNPLNMVGNLNPQKQPPFNLNLNMQSGF.

The HTH myb-type domain maps to 36–90 (TISKQRENWTDEEHQKFLEALTLFDRDWKKIESFVGSKTVIQIRSHAQKYFIKVQ). A DNA-binding region (H-T-H motif) is located at residues 63 to 86 (WKKIESFVGSKTVIQIRSHAQKYF). 3 disordered regions span residues 93 to 116 (NTGERIPPPRPKRKSIQPYPQKQK), 177 to 205 (QQAVTTAQSSQRNGGLPPNPSSNNGGTTL), and 284 to 372 (ISPR…LGNY). The segment covering 177-202 (QQAVTTAQSSQRNGGLPPNPSSNNGG) has biased composition (low complexity). Residues 286–295 (PRNSTGNINV) show a composition bias toward polar residues. Residues 302 to 354 (NNSNNNNNNNNNNNNNNNNNNNNNNNNNNNNNNNNNNNNNNNNNNNNNNNNNN) show a composition bias toward low complexity. Positions 361–372 (QNHSNMVNLGNY) are enriched in polar residues.

The protein localises to the nucleus. The chain is Myb-like protein G (mybG) from Dictyostelium discoideum (Social amoeba).